The primary structure comprises 66 residues: Beta-defensin 107A (66 aa).

An N-terminal signal peptide occupies residues 1-22 (MKIFFFIFAALFLLAQIFQART). 2 disulfides stabilise this stretch: cysteine 37/cysteine 51 and cysteine 41/cysteine 60.

This sequence belongs to the beta-defensin family.

It is found in the secreted. Has antibacterial activity. This Gorilla gorilla gorilla (Western lowland gorilla) protein is Beta-defensin 107A (DEFB107A).